The sequence spans 136 residues: Urease subunit beta (136 aa).

The protein belongs to the urease beta subunit family. In terms of assembly, heterotrimer of UreA (gamma), UreB (beta) and UreC (alpha) subunits. Three heterotrimers associate to form the active enzyme.

It localises to the cytoplasm. The catalysed reaction is urea + 2 H2O + H(+) = hydrogencarbonate + 2 NH4(+). It functions in the pathway nitrogen metabolism; urea degradation; CO(2) and NH(3) from urea (urease route): step 1/1. The sequence is that of Urease subunit beta from Staphylococcus aureus (strain Mu3 / ATCC 700698).